The sequence spans 119 residues: Autophagy-related protein 8c (119 aa).

A lipid anchor (Phosphatidylethanolamine amidated glycine) is attached at G117. A propeptide spans 118 to 119 (LV) (removed in mature form).

It belongs to the ATG8 family. In terms of assembly, interacts with ATG4. Interacts with NBR1. The C-terminal 2 residues are removed by ATG4 to expose Gly-117 at the C-terminus. This Gly-117 forms then a thioester bond with the 'Cys-558' of ATG7 (E1-like activating enzyme) before being transferred to the 'Cys-258' of ATG3 (the specific E2 conjugating enzyme), in order to be finally amidated with phosphatidylethanolamine. This lipid modification anchors ATG8 to autophagosomes. As to expression, constitutively expressed.

The protein localises to the cytoplasmic vesicle. Its subcellular location is the autophagosome membrane. The protein resides in the vacuole membrane. It localises to the cytoplasm. It is found in the cytoskeleton. Its function is as follows. Ubiquitin-like modifier involved in autophagosomes formation. May mediate the delivery of the autophagosomes to the vacuole via the microtubule cytoskeleton. The chain is Autophagy-related protein 8c (ATG8C) from Arabidopsis thaliana (Mouse-ear cress).